Here is a 377-residue protein sequence, read N- to C-terminus: Protein MULTIPOLAR SPINDLE 1 (377 aa).

A Nuclear localization signal motif is present at residues 117–124 (LRRRFLRL).

Expressed in roots, stems, leaves, inflorescences and seedlings. Strongly expressed in meiocytes.

Its subcellular location is the nucleus. It localises to the cytoplasm. It is found in the cytoskeleton. The protein resides in the spindle. Involved in meiotic spindle organization in meiocytes thus regulating chromosome segregation. Required for formation of meiotic DNA double-strand breaks (DSBs) during early recombination processes. This is Protein MULTIPOLAR SPINDLE 1 from Arabidopsis thaliana (Mouse-ear cress).